Here is a 338-residue protein sequence, read N- to C-terminus: MAPTKVGINGFGRIGRIVFRNAIEHDDIDIVAVNDPFIETEYAAYMLKYDSTHGQFKGDIKVLSDGLEVNGKKVKFYTERDPANIPWAESEAYYVVESTGVFTTTEKAKAHLKGGAKKVVISAPSADAPMYVMGVNNETYNGEADVISNASCTTNCLAPLAKVINDEFTIIESLMTTIHSYTATQKTVDGPSAKDWRGGRTAAQNIIPSSTGAAKAVGKVIPELNGKLTGMSMRVPTATVSVVDLTVRIEKAASYDEIKEVIKKAANGPLKGILAYTEDDVVSTDMNGDNHSSIFDAKAGISLNKNFVKLVSWYDNEWGYSRRVLDLLHYISKVDNKQ.

NAD(+) contacts are provided by residues 13-14, Asp35, and Arg80; that span reads RI. D-glyceraldehyde 3-phosphate contacts are provided by residues 151–153, Thr182, 211–212, and Arg234; these read SCT and TG. Cys152 (nucleophile) is an active-site residue. Asn316 serves as a coordination point for NAD(+).

Belongs to the glyceraldehyde-3-phosphate dehydrogenase family. In terms of assembly, homotetramer.

The protein resides in the cytoplasm. The catalysed reaction is D-glyceraldehyde 3-phosphate + phosphate + NAD(+) = (2R)-3-phospho-glyceroyl phosphate + NADH + H(+). It functions in the pathway carbohydrate degradation; glycolysis; pyruvate from D-glyceraldehyde 3-phosphate: step 1/5. This chain is Glyceraldehyde-3-phosphate dehydrogenase (GPD), found in Sclerotinia sclerotiorum (White mold).